The primary structure comprises 468 residues: ATP synthase subunit beta (468 aa).

148–155 serves as a coordination point for ATP; it reads GGAGVGKT.

It belongs to the ATPase alpha/beta chains family. As to quaternary structure, F-type ATPases have 2 components, CF(1) - the catalytic core - and CF(0) - the membrane proton channel. CF(1) has five subunits: alpha(3), beta(3), gamma(1), delta(1), epsilon(1). CF(0) has three main subunits: a(1), b(2) and c(9-12). The alpha and beta chains form an alternating ring which encloses part of the gamma chain. CF(1) is attached to CF(0) by a central stalk formed by the gamma and epsilon chains, while a peripheral stalk is formed by the delta and b chains.

The protein localises to the cell inner membrane. The enzyme catalyses ATP + H2O + 4 H(+)(in) = ADP + phosphate + 5 H(+)(out). Functionally, produces ATP from ADP in the presence of a proton gradient across the membrane. The catalytic sites are hosted primarily by the beta subunits. This Stenotrophomonas maltophilia (strain R551-3) protein is ATP synthase subunit beta.